The sequence spans 117 residues: Large ribosomal subunit protein bL20 (117 aa).

The protein belongs to the bacterial ribosomal protein bL20 family.

In terms of biological role, binds directly to 23S ribosomal RNA and is necessary for the in vitro assembly process of the 50S ribosomal subunit. It is not involved in the protein synthesizing functions of that subunit. In Natranaerobius thermophilus (strain ATCC BAA-1301 / DSM 18059 / JW/NM-WN-LF), this protein is Large ribosomal subunit protein bL20.